A 160-amino-acid polypeptide reads, in one-letter code: Protein P5 (160 aa).

The helical transmembrane segment at 7–23 threads the bilayer; the sequence is FLATAAALGVAMFPTQI.

It is found in the virion membrane. This Pseudoalteromonas espejiana (Bacteriophage PM2) protein is Protein P5 (V).